Here is a 224-residue protein sequence, read N- to C-terminus: UPF0758 protein PST_0473 (224 aa).

Residues 102–224 (ALESPQAVRD…PLSMAEYGWM (123 aa)) enclose the MPN domain. H173, H175, and D186 together coordinate Zn(2+). The JAMM motif motif lies at 173-186 (HNHPSGVAEPSQAD).

Belongs to the UPF0758 family.

This Stutzerimonas stutzeri (strain A1501) (Pseudomonas stutzeri) protein is UPF0758 protein PST_0473.